The chain runs to 60 residues: Large ribosomal subunit protein uL30 (60 aa).

It belongs to the universal ribosomal protein uL30 family. In terms of assembly, part of the 50S ribosomal subunit.

This is Large ribosomal subunit protein uL30 from Streptococcus pneumoniae (strain Hungary19A-6).